Reading from the N-terminus, the 248-residue chain is uncharacterized protein (248 aa).

The 240-residue stretch at 7–246 (VQLSNLSWTF…PASTILLPTS (240 aa)) folds into the ABC transporter domain. ATP is bound at residue 43–50 (GQSGSGKS).

Belongs to the ABC transporter superfamily.

This is an uncharacterized protein from Mycobacterium tuberculosis (strain CDC 1551 / Oshkosh).